We begin with the raw amino-acid sequence, 261 residues long: Cytochrome c oxidase subunit 3 (261 aa).

At 1–15 the chain is on the mitochondrial matrix side; that stretch reads MAHQAHAYHMVDPSP. Residues 16–34 form a helical membrane-spanning segment; the sequence is WPLTGAIAALLMTSGLAIW. Residues 35–40 lie on the Mitochondrial intermembrane side of the membrane; the sequence is FHFHST. The chain crosses the membrane as a helical span at residues 41–66; the sequence is TLMTLGLILLLLTMYQWWRDIIREGT. Residues 67 to 72 are Mitochondrial matrix-facing; it reads FQGHHT. The chain crosses the membrane as a helical span at residues 73–105; sequence PPVQKGLRYGMILFITSEVFFFLGFFWAFYHSS. Residues 106 to 128 lie on the Mitochondrial intermembrane side of the membrane; the sequence is LAPTPELGGCWPPTGITPLDPFE. The helical transmembrane segment at 129-152 threads the bilayer; it reads VPLLNTAVLLASGVTVTWAHHSIM. Over 153–155 the chain is Mitochondrial matrix; it reads EGE. The chain crosses the membrane as a helical span at residues 156–183; that stretch reads RKQAIQSLALTILLGFYFTALQAMEYYE. The Mitochondrial intermembrane segment spans residues 184-190; it reads APFTIAD. A helical membrane pass occupies residues 191–223; the sequence is GVYGSTFFVATGFHGLHVIIGSTFLAVCLLRQI. Residues 224-232 lie on the Mitochondrial matrix side of the membrane; the sequence is QYHFTSEHH. The helical transmembrane segment at 233 to 256 threads the bilayer; that stretch reads FGFEAAAWYWHFVDVVWLFLYVSI. At 257 to 261 the chain is on the mitochondrial intermembrane side; the sequence is YWWGS.

Belongs to the cytochrome c oxidase subunit 3 family. Component of the cytochrome c oxidase (complex IV, CIV), a multisubunit enzyme composed of 14 subunits. The complex is composed of a catalytic core of 3 subunits MT-CO1, MT-CO2 and MT-CO3, encoded in the mitochondrial DNA, and 11 supernumerary subunits COX4I, COX5A, COX5B, COX6A, COX6B, COX6C, COX7A, COX7B, COX7C, COX8 and NDUFA4, which are encoded in the nuclear genome. The complex exists as a monomer or a dimer and forms supercomplexes (SCs) in the inner mitochondrial membrane with NADH-ubiquinone oxidoreductase (complex I, CI) and ubiquinol-cytochrome c oxidoreductase (cytochrome b-c1 complex, complex III, CIII), resulting in different assemblies (supercomplex SCI(1)III(2)IV(1) and megacomplex MCI(2)III(2)IV(2)).

It is found in the mitochondrion inner membrane. The catalysed reaction is 4 Fe(II)-[cytochrome c] + O2 + 8 H(+)(in) = 4 Fe(III)-[cytochrome c] + 2 H2O + 4 H(+)(out). Functionally, component of the cytochrome c oxidase, the last enzyme in the mitochondrial electron transport chain which drives oxidative phosphorylation. The respiratory chain contains 3 multisubunit complexes succinate dehydrogenase (complex II, CII), ubiquinol-cytochrome c oxidoreductase (cytochrome b-c1 complex, complex III, CIII) and cytochrome c oxidase (complex IV, CIV), that cooperate to transfer electrons derived from NADH and succinate to molecular oxygen, creating an electrochemical gradient over the inner membrane that drives transmembrane transport and the ATP synthase. Cytochrome c oxidase is the component of the respiratory chain that catalyzes the reduction of oxygen to water. Electrons originating from reduced cytochrome c in the intermembrane space (IMS) are transferred via the dinuclear copper A center (CU(A)) of subunit 2 and heme A of subunit 1 to the active site in subunit 1, a binuclear center (BNC) formed by heme A3 and copper B (CU(B)). The BNC reduces molecular oxygen to 2 water molecules using 4 electrons from cytochrome c in the IMS and 4 protons from the mitochondrial matrix. This is Cytochrome c oxidase subunit 3 (mt-co3) from Carassius auratus (Goldfish).